The following is a 151-amino-acid chain: uncharacterized protein (151 aa).

BON domains are found at residues 2-68 (DDAA…AVDK) and 78-146 (IDSA…RLKH).

This is an uncharacterized protein from Anaplasma centrale.